A 148-amino-acid polypeptide reads, in one-letter code: Large ribosomal subunit protein bL9 (148 aa).

Belongs to the bacterial ribosomal protein bL9 family.

Its function is as follows. Binds to the 23S rRNA. This Bifidobacterium animalis subsp. lactis (strain AD011) protein is Large ribosomal subunit protein bL9.